A 700-amino-acid chain; its full sequence is Calpain-2 catalytic subunit (700 aa).

At alanine 2 the chain carries N-acetylalanine. The propeptide at 2–19 (AGIAAKLVKDREAAEGLG) is anchors to the small subunit. Positions 45–344 (LFQDPSFPAI…YSRLEICNLT (300 aa)) constitute a Calpain catalytic domain. Ca(2+) is bound by residues isoleucine 89, glycine 91, and aspartate 96. Cysteine 105 is a catalytic residue. Ca(2+) is bound by residues glutamate 175, glutamine 229, and lysine 230. Active-site residues include histidine 262 and asparagine 286. Ca(2+) is bound by residues glutamate 292, aspartate 299, and glutamate 323. Residues 345–514 (PDTLTSDTYK…KKADYQAVDD (170 aa)) form a domain III region. Residues 515–529 (EIEANLEEFDISEDD) form a linker region. The segment at 530–700 (IDDGFRRLFA…LISWLCFSVL (171 aa)) is domain IV. Residues alanine 542, aspartate 545, glutamate 547, glutamate 552, aspartate 585, aspartate 587, serine 589, lysine 591, glutamate 596, aspartate 615, aspartate 617, serine 619, threonine 621, glutamate 626, aspartate 658, and asparagine 661 each contribute to the Ca(2+) site. EF-hand domains lie at 572 to 605 (FSIETCKIMVDMLDSDGSGKLGLKEFYILWTKIQ) and 602 to 637 (TKIQKYQKIYREIDVDRSGTMNSYEMRKALEEAGFK). The 34-residue stretch at 667 to 700 (VRLETLFKIFKQLDPENTGTIELDLISWLCFSVL) folds into the EF-hand 3 domain.

Belongs to the peptidase C2 family. As to quaternary structure, forms a heterodimer with a small (regulatory) subunit (CAPNS1). Interacts with CPEB3; this leads to cleavage of CPEB3. Ca(2+) is required as a cofactor.

It is found in the cytoplasm. The protein localises to the cell membrane. The catalysed reaction is Broad endopeptidase specificity.. Activated by 200-1000 micromolar concentrations of calcium and inhibited by calpastatin. In terms of biological role, calcium-regulated non-lysosomal thiol-protease which catalyzes limited proteolysis of substrates involved in cytoskeletal remodeling and signal transduction. Proteolytically cleaves MYOC at 'Arg-226'. Proteolytically cleaves CPEB3 following neuronal stimulation which abolishes CPEB3 translational repressor activity, leading to translation of CPEB3 target mRNAs. This Macaca fascicularis (Crab-eating macaque) protein is Calpain-2 catalytic subunit (CAPN2).